Reading from the N-terminus, the 357-residue chain is N-methyltransferase dtpB (357 aa).

It belongs to the methyltransferase superfamily.

Its pathway is alkaloid biosynthesis. In terms of biological role, N-methyltransferase; part of the gene cluster that mediates the biosynthesis of the dimeric diketopiperazine alkaloid ditryptophenaline. The nonribosomal peptide synthase dtpA accepts L-tryptophan and L-phenylalanine as its substrates and forms the phenylalanyl-tryptophanyl cyclic dipeptide product cyclophenylalanyltryptophenyl. The N-methyltransferase dtpB is responsible for the N-methylation of cyclophenylalanyltryptophenyl to yield cyclo-N-methylphenylalanyltryptophenyl. The cytochrome P450 monooxygenase is responsible not only for pyrroloindole ring formation but also for concurrent dimerization of N-methylphenylalanyltryptophanyl diketopiperazine monomers into a homodimeric product. The chain is N-methyltransferase dtpB from Aspergillus flavus (strain ATCC 200026 / FGSC A1120 / IAM 13836 / NRRL 3357 / JCM 12722 / SRRC 167).